The primary structure comprises 643 residues: Phosphatidylinositol-3,5-bisphosphate 3-phosphatase MTMR2 (643 aa).

Residues 1-52 (MEKSSSCESLGAQLPAARLPSEDSLSSASTSHSENSVHTKSASAISSDSIST) form a disordered region. Phosphoserine is present on residues Ser6 and Ser9. The span at 23 to 40 (DSLSSASTSHSENSVHTK) shows a compositional bias: polar residues. Low complexity predominate over residues 41 to 52 (SASAISSDSIST). A Phosphoserine modification is found at Ser58. Residues 68–139 (NKLAEMEEPA…GVISRVEKIG (72 aa)) form the GRAM domain. In terms of domain architecture, Myotubularin phosphatase spans 205 to 580 (GWKLYDPLLE…RHLELWVGYY (376 aa)). The a 1,2-diacyl-sn-glycero-3-phospho-(1D-myo-inositol-3,5-bisphosphate) site is built by Asn330, Asn355, and Ile356. Asn330, Asn355, and Ile356 together coordinate a 1,2-diacyl-sn-glycero-3-phospho-(1D-myo-inositol-3-phosphate). Cys417 acts as the Phosphocysteine intermediate in catalysis. Residues Ser418, Asp419, Gly420, Trp421, Asp422, Arg423, Arg459, and Arg463 each contribute to the a 1,2-diacyl-sn-glycero-3-phospho-(1D-myo-inositol-3,5-bisphosphate) site. A 1,2-diacyl-sn-glycero-3-phospho-(1D-myo-inositol-3-phosphate)-binding residues include Ser418, Asp419, Gly420, Trp421, Asp422, and Arg423. Arg463 is an a 1,2-diacyl-sn-glycero-3-phospho-(1D-myo-inositol-3-phosphate) binding site. Residues 593–627 (IHSRYKELLAKRAELQRKVEELQREISNRSTSSSE) are a coiled coil. Residues 614–643 (LQREISNRSTSSSERASSPAQCVTPVQTVV) are disordered. Residues 620 to 631 (NRSTSSSERASS) show a composition bias toward low complexity. A compositionally biased stretch (polar residues) spans 632 to 643 (PAQCVTPVQTVV).

This sequence belongs to the protein-tyrosine phosphatase family. Non-receptor class myotubularin subfamily. Homodimer (via coiled-coil domain). Heterotetramer consisting of one MTMR2 dimer and one SBF2/MTMR13 dimer; specifically in peripheral nerves stabilizes SBF2/MTMR13 at the membranes and increases MTMR2 catalytic activity towards phosphatidylinositol 3,5-bisphosphate and to a lesser extent towards phosphatidylinositol 3-phosphate. Heterodimer with SBF1/MTMR5; acts as an adapter for the phosphatase MTMR2 to regulate MTMR2 catalytic activity and subcellular location. Heterodimer with MTMR12. In terms of processing, phosphorylation at Ser-58 decreases MTMR2 localization to endocytic vesicular structures. As to expression, expressed in sciatic nerve and in Schwann cells (at protein level). Detected in adult dorsal root ganglia, neurons of the central nervous system, motor neurons, cell soma and neurites of sensory neurons, olfactory bulb, cerebellum and hippocampus.

The protein localises to the cytoplasm. It is found in the early endosome membrane. The protein resides in the perinuclear region. Its subcellular location is the cell projection. It localises to the axon. The protein localises to the endosome membrane. It catalyses the reaction a 1,2-diacyl-sn-glycero-3-phospho-(1D-myo-inositol-3,5-bisphosphate) + H2O = a 1,2-diacyl-sn-glycero-3-phospho-(1D-myo-inositol-5-phosphate) + phosphate. It carries out the reaction a 1,2-diacyl-sn-glycero-3-phospho-(1D-myo-inositol-3-phosphate) + H2O = a 1,2-diacyl-sn-glycero-3-phospho-(1D-myo-inositol) + phosphate. The enzyme catalyses 1,2-dioctanoyl-sn-glycero-3-phospho-(1-D-myo-inositol-3-phosphate) + H2O = 1,2-dioctanoyl-sn-glycero-3-phospho-(1D-myo-inositol) + phosphate. The catalysed reaction is 1,2-dioctanoyl-sn-glycero-3-phospho-(1D-myo-inositol-3,5-bisphosphate) + H2O = 1,2-dioctanoyl-sn-glycero-3-phospho-(1D-myo-inositol-5-phosphate) + phosphate. Lipid phosphatase that specifically dephosphorylates the D-3 position of phosphatidylinositol 3-phosphate and phosphatidylinositol 3,5-bisphosphate, generating phosphatidylinositol and phosphatidylinositol 5-phosphate. Regulates the level of these phosphoinositides critical for various biological processes including autophagy initiation and autophagosome maturation. In Mus musculus (Mouse), this protein is Phosphatidylinositol-3,5-bisphosphate 3-phosphatase MTMR2.